Consider the following 416-residue polypeptide: Chaperone protein dnaJ A6 (416 aa).

Positions 12–73 constitute a J domain; that stretch reads KYYEVLGVPK…EKRDIYDQYG (62 aa). The CR-type zinc-finger motif lies at 133 to 217; that stretch reads GSMKKLSLSR…CRASKVIQEK (85 aa). Residues cysteine 146, cysteine 149, cysteine 162, cysteine 165, cysteine 189, cysteine 192, cysteine 205, and cysteine 208 each coordinate Zn(2+). 3 CXXCXGXG motif repeats span residues 146–153, 162–169, and 189–196; these read CPKCKGKG, CYGCHGVG, and CPECRGSG. Positions 380 to 399 are enriched in basic and acidic residues; it reads HDVNIEEEMRRKQYQRKQEA. Residues 380–416 form a disordered region; that stretch reads HDVNIEEEMRRKQYQRKQEAYDEDEEEDAPRVQCAQQ.

This sequence belongs to the DnaJ family. As to quaternary structure, interacts with ZFP1.

Its subcellular location is the nucleus. It localises to the cytoplasm. In terms of biological role, involved in disease resistance. Acts as a negative regulator of innate immunity to the rice blast fungus (Magnaporthe oryzae). Acts as a negative regulator of the pathogen-associated molecular pattern (PAMP)-triggered immunity (PTI) response through the inhibition of reactive oxygen species (ROS) accumulation and expression of defense-related genes. May function via the ubiquitin-proteasome degradation pathway. This is Chaperone protein dnaJ A6 from Oryza sativa subsp. japonica (Rice).